We begin with the raw amino-acid sequence, 700 residues long: Phosphoribosylformylglycinamidine synthase subunit PurL (700 aa).

The active site involves His-34. Tyr-37 provides a ligand contact to ATP. Glu-79 is a binding site for Mg(2+). Substrate is bound by residues 80–83 (SHNH) and Arg-102. His-81 acts as the Proton acceptor in catalysis. Asp-103 contacts Mg(2+). Substrate is bound at residue Gln-227. Asp-255 is a Mg(2+) binding site. 299-301 (ESQ) contributes to the substrate binding site. ATP-binding residues include Asp-476 and Gly-513. Asn-514 contributes to the Mg(2+) binding site. A substrate-binding site is contributed by Ser-516.

This sequence belongs to the FGAMS family. As to quaternary structure, monomer. Part of the FGAM synthase complex composed of 1 PurL, 1 PurQ and 2 PurS subunits.

Its subcellular location is the cytoplasm. It catalyses the reaction N(2)-formyl-N(1)-(5-phospho-beta-D-ribosyl)glycinamide + L-glutamine + ATP + H2O = 2-formamido-N(1)-(5-O-phospho-beta-D-ribosyl)acetamidine + L-glutamate + ADP + phosphate + H(+). It functions in the pathway purine metabolism; IMP biosynthesis via de novo pathway; 5-amino-1-(5-phospho-D-ribosyl)imidazole from N(2)-formyl-N(1)-(5-phospho-D-ribosyl)glycinamide: step 1/2. Its function is as follows. Part of the phosphoribosylformylglycinamidine synthase complex involved in the purines biosynthetic pathway. Catalyzes the ATP-dependent conversion of formylglycinamide ribonucleotide (FGAR) and glutamine to yield formylglycinamidine ribonucleotide (FGAM) and glutamate. The FGAM synthase complex is composed of three subunits. PurQ produces an ammonia molecule by converting glutamine to glutamate. PurL transfers the ammonia molecule to FGAR to form FGAM in an ATP-dependent manner. PurS interacts with PurQ and PurL and is thought to assist in the transfer of the ammonia molecule from PurQ to PurL. This is Phosphoribosylformylglycinamidine synthase subunit PurL from Halobacterium salinarum (strain ATCC 29341 / DSM 671 / R1).